The following is a 204-amino-acid chain: Holliday junction resolvase RecU (204 aa).

Positions 89, 91, 104, and 123 each coordinate Mg(2+).

This sequence belongs to the RecU family. Requires Mg(2+) as cofactor.

Its subcellular location is the cytoplasm. It catalyses the reaction Endonucleolytic cleavage at a junction such as a reciprocal single-stranded crossover between two homologous DNA duplexes (Holliday junction).. In terms of biological role, endonuclease that resolves Holliday junction intermediates in genetic recombination. Cleaves mobile four-strand junctions by introducing symmetrical nicks in paired strands. Promotes annealing of linear ssDNA with homologous dsDNA. Required for DNA repair, homologous recombination and chromosome segregation. The protein is Holliday junction resolvase RecU of Leuconostoc mesenteroides subsp. mesenteroides (strain ATCC 8293 / DSM 20343 / BCRC 11652 / CCM 1803 / JCM 6124 / NCDO 523 / NBRC 100496 / NCIMB 8023 / NCTC 12954 / NRRL B-1118 / 37Y).